The sequence spans 93 residues: DNA-binding protein Fis (93 aa).

Positions glutamine 74–lysine 93 form a DNA-binding region, H-T-H motif.

The protein belongs to the transcriptional regulatory Fis family. As to quaternary structure, homodimer.

Its function is as follows. Activates ribosomal RNA transcription. Plays a direct role in upstream activation of rRNA promoters. This chain is DNA-binding protein Fis, found in Klebsiella pneumoniae.